The sequence spans 237 residues: Adenosine 5'-phosphosulfate reductase (237 aa).

[4Fe-4S] cluster is bound by residues C123, C124, C206, and C209. The active-site Nucleophile; cysteine thiosulfonate intermediate is the C232.

The protein belongs to the PAPS reductase family. CysH subfamily. [4Fe-4S] cluster is required as a cofactor.

Its subcellular location is the cytoplasm. It catalyses the reaction [thioredoxin]-disulfide + sulfite + AMP + 2 H(+) = adenosine 5'-phosphosulfate + [thioredoxin]-dithiol. The protein operates within sulfur metabolism; hydrogen sulfide biosynthesis; sulfite from sulfate. In terms of biological role, catalyzes the formation of sulfite from adenosine 5'-phosphosulfate (APS) using thioredoxin as an electron donor. The chain is Adenosine 5'-phosphosulfate reductase from Mycobacteroides abscessus (strain ATCC 19977 / DSM 44196 / CCUG 20993 / CIP 104536 / JCM 13569 / NCTC 13031 / TMC 1543 / L948) (Mycobacterium abscessus).